The following is a 422-amino-acid chain: Tyrosine--tRNA ligase (422 aa).

Residue Tyr-35 participates in L-tyrosine binding. A 'HIGH' region motif is present at residues 40–49; it reads PTADSLHIGH. Residues Tyr-170 and Gln-174 each coordinate L-tyrosine. The 'KMSKS' region motif lies at 232–236; sequence KFGKT. Lys-235 is a binding site for ATP. An S4 RNA-binding domain is found at 355 to 421; it reads LTLVDLLVES…GKKKYFLVTY (67 aa).

This sequence belongs to the class-I aminoacyl-tRNA synthetase family. TyrS type 1 subfamily. Homodimer.

It localises to the cytoplasm. It carries out the reaction tRNA(Tyr) + L-tyrosine + ATP = L-tyrosyl-tRNA(Tyr) + AMP + diphosphate + H(+). Functionally, catalyzes the attachment of tyrosine to tRNA(Tyr) in a two-step reaction: tyrosine is first activated by ATP to form Tyr-AMP and then transferred to the acceptor end of tRNA(Tyr). The polypeptide is Tyrosine--tRNA ligase (Bacillus pumilus (strain SAFR-032)).